The chain runs to 46 residues: MLTLLNTFAELPEAYKAFAPTVDVLPLIPLFFFLLVFVWQAAVGFK.

The propeptide occupies 1-9; the sequence is MLTLLNTFA. A helical transmembrane segment spans residues 25–45; it reads LPLIPLFFFLLVFVWQAAVGF.

It belongs to the PsbK family. In terms of assembly, PSII is composed of 1 copy each of membrane proteins PsbA, PsbB, PsbC, PsbD, PsbE, PsbF, PsbH, PsbI, PsbJ, PsbK, PsbL, PsbM, PsbT, PsbX, PsbY, Psb30/Ycf12, peripheral proteins PsbO, CyanoQ (PsbQ), PsbU, PsbV and a large number of cofactors. It forms dimeric complexes.

It localises to the cellular thylakoid membrane. One of the components of the core complex of photosystem II (PSII). PSII is a light-driven water:plastoquinone oxidoreductase that uses light energy to abstract electrons from H(2)O, generating O(2) and a proton gradient subsequently used for ATP formation. It consists of a core antenna complex that captures photons, and an electron transfer chain that converts photonic excitation into a charge separation. The sequence is that of Photosystem II reaction center protein K from Prochlorococcus marinus (strain MIT 9515).